The following is a 306-amino-acid chain: Glutaminase (306 aa).

Residues Ser61, Asn111, Glu157, Asn164, Tyr188, Tyr240, and Val258 each contribute to the substrate site.

This sequence belongs to the glutaminase family. In terms of assembly, homotetramer.

The enzyme catalyses L-glutamine + H2O = L-glutamate + NH4(+). This chain is Glutaminase, found in Pseudoalteromonas atlantica (strain T6c / ATCC BAA-1087).